The sequence spans 507 residues: ATP synthase subunit alpha, chloroplastic (507 aa).

170–177 (GDRQTGKT) lines the ATP pocket.

Belongs to the ATPase alpha/beta chains family. F-type ATPases have 2 components, CF(1) - the catalytic core - and CF(0) - the membrane proton channel. CF(1) has five subunits: alpha(3), beta(3), gamma(1), delta(1), epsilon(1). CF(0) has four main subunits: a, b, b' and c.

Its subcellular location is the plastid. It localises to the chloroplast thylakoid membrane. The enzyme catalyses ATP + H2O + 4 H(+)(in) = ADP + phosphate + 5 H(+)(out). Produces ATP from ADP in the presence of a proton gradient across the membrane. The alpha chain is a regulatory subunit. The polypeptide is ATP synthase subunit alpha, chloroplastic (Citrus sinensis (Sweet orange)).